A 267-amino-acid polypeptide reads, in one-letter code: PF03932 family protein CutC (267 aa).

The protein belongs to the CutC family.

It localises to the cytoplasm. This chain is PF03932 family protein CutC, found in Xylella fastidiosa (strain Temecula1 / ATCC 700964).